We begin with the raw amino-acid sequence, 241 residues long: HTH-type quorum-sensing regulator RhlR (241 aa).

One can recognise an HTH luxR-type domain in the interval Leu174–Gly239. The segment at residues Ser198 to Lys217 is a DNA-binding region (H-T-H motif).

This sequence belongs to the autoinducer-regulated transcriptional regulatory protein family. Homodimer in the absence of any acyl-L-homoserine lactone. The presence of the autoinducer C4-HSL has no significant effect on dimerization whereas N-(3-oxododecanoyl)-L-homoserine lactone (3O-C12-HSL), the LasR inducer, is able to dissociate the RhlR homodimers into monomers.

It localises to the cytoplasm. With respect to regulation, activated by interaction with the autoinducer signal molecule N-butanoyl-L-homoserine lactone (C4-HSL or BHL), the product of the RhlI synthase. Is also activated by binding to rosmarinic acid (RA), a homoserine lactone mimic produced by plants, which induces a broad quorum sensing response, including the induction of all major quorum sensing controlled virulence factors. Rosmarinic acid secretion may be a plant defense mechanism to stimulate a premature quorum sensing response. Quorum-sensing regulator that controls the expression of multiple virulence factors in response to extracellular signaling molecules called autoinducers. Involved, among others, in the transcriptional regulation of genes that are responsible for rhamnolipid surfactant biosynthesis. Acts by binding to a specific sequence in the rhlAB regulatory region, both in the presence and in the absence of its autoinducer. In the former case it activates transcription of the promoter, whereas in the latter it acts as a transcriptional repressor. Also regulates the expression of the rmlBDAC operon, encoding dTDP-L-rhamnose biosynthetic enzymes, by binding to the rml box in the promoter region. In addition, is involved in the regulation of the production of elastase (lasB) and pyocyanine. This is HTH-type quorum-sensing regulator RhlR from Pseudomonas aeruginosa (strain ATCC 15692 / DSM 22644 / CIP 104116 / JCM 14847 / LMG 12228 / 1C / PRS 101 / PAO1).